A 594-amino-acid polypeptide reads, in one-letter code: MVDIEAVRAKYREERDKRVQADGGRQYLSAQGEFAHYADDPHAKPIERAPVSDEVDVTIIGAGIGGLLLGARLREACAFDTIRLVDKAGDVGGTWYWNRFPGLRCDVESYVYMPLLEELGRLPSEKYATGAEIFEHCQAIARTYDLYDEALLQTSVTELSWDEDSSRWLVRTDRGDLVRSRFVAMAIGSLHRPKLPSIPGTEAFQGHSFHTSRWDFAYTGGDISGGLEKLGDKRVGIVGTGATAVQCIPHLAESAAHLYVFQRTPSTVSVRNNRPTDPGWAAGLEPGWQQRRMDNFHALTSGVDQDVDLVQDGWTEITSKLAAILPKSAADADPKDIGTAVELADFHKMEELRKRVDAIVHDKDTADALKPYYRLFCKRPCFHDGYLDTYNRPNVTLVDTQGRGVERLTPTSVVAGGREYPVDCLIFASGYESEFGVPYTNRTGFSIVGRDGIRLSEKWAEGARTFHGLQVNGFPNCFILSKAQSGLHVNVPYMLNEQSKHVAYILKAVQQRGRQVVEASATGEKEWVETILRLANRNLDFTESCTPGLFNNEGNPRNVAILNSSYGGGSVGFVNILKRWREADDLADLELREG.

FAD-binding positions include 64-65, 86-87, 94-95, 106-107, Y112, V156, and M494; these read IG, DK, TW, and DV.

Belongs to the FAD-binding monooxygenase family. FAD serves as cofactor.

It catalyses the reaction 1-deoxy-11-oxopentalenate + NADPH + O2 + H(+) = neopentalenolactone D + NADP(+) + H2O. The protein operates within antibiotic biosynthesis; neopentalenolactone biosynthesis. In terms of biological role, catalyzes the flavin-dependent Baeyer-Villiger oxidation of 1-deoxy-11-oxopentalenic acid to neopentalenolactone D in the biosynthesis of neopentalenolactone antibiotic. The sequence is that of Neopentalenolactone D synthase (ptlE) from Streptomyces avermitilis (strain ATCC 31267 / DSM 46492 / JCM 5070 / NBRC 14893 / NCIMB 12804 / NRRL 8165 / MA-4680).